The chain runs to 85 residues: N.vectensis toxin 1 4 (85 aa).

The signal sequence occupies residues 1 to 20 (MASFKIVIVCLALLVAVASA). Positions 21–36 (RRRDMMSDDELDYHYS) are excised as a propeptide. Intrachain disulfides connect Cys42-Cys82, Cys44-Cys72, and Cys65-Cys83.

This sequence belongs to the sea anemone sodium channel inhibitory toxin family. Type II subfamily. In terms of tissue distribution, expressed in ectodermal glands and in clumps outside of the extodermal layer. Is not expressed in nematocytes. In adult female tissues, shows similar expression levels in mesenteries (gametes-producing tissue), tentacles, pharynx and physa.

It is found in the secreted. In terms of biological role, binds to site 3 of voltage-gated sodium channels and inhibits the inactivation process. Is highly active on DmNav1/TipE (drosophila) and is only extremely weakly active on rat Nav1.4-beta-1/SCN4A-SCN1B, and on human Nav1.5-beta-1/SCN5A-beta-1. This reveals high specificity for arthropod over mammalian channels. In vivo, when released into the medium, this recombinant toxin induces impaired swimming, paralysis and death of the crustacean A.nauplii within several hours. Also causes paralysis of cherry shrimps immediately after injection at very low doses. Its effect on zebrafish (D.rerio) larvae is also rapid, since it induces tail twitching accompanied by impaired swimming after 20 minutes and complete paralysis within 45 minutes. It has also been observed to cause death of zebrafish larvae within 1 hour. The chain is N.vectensis toxin 1 4 from Nematostella vectensis (Starlet sea anemone).